The following is a 485-amino-acid chain: Arginine/agmatine antiporter (485 aa).

The next 12 membrane-spanning stretches (helical) occupy residues 12 to 34 (GTIA…SLPQ), 38 to 60 (ATAG…FFIA), 89 to 111 (IGFT…YAVI), 126 to 148 (GGNT…FIVL), 155 to 177 (SIIN…ILTA), 211 to 230 (TMLV…VMSG), 243 to 265 (VLGF…GSLF), 291 to 313 (VLMN…IIVA), 363 to 385 (WNTM…AAFL), 400 to 422 (IKAP…LIYA), 427 to 446 (YLFM…IDAG), and 461 to 483 (IVGM…TGRI).

It belongs to the amino acid-polyamine-organocation (APC) superfamily. Basic amino acid/polyamine antiporter (APA) (TC 2.A.3.2) family.

It localises to the cell inner membrane. Its function is as follows. Catalyzes the exchange of L-arginine for agmatine. The arginine uptake by the bacterium in the macrophage may be a virulence factor against the host innate immune response. In Chlamydia pneumoniae (Chlamydophila pneumoniae), this protein is Arginine/agmatine antiporter (aaxC).